We begin with the raw amino-acid sequence, 134 residues long: Arsenate reductase 1 (134 aa).

Residues Cys11, Cys83, and Cys90 each act as nucleophile in the active site. 2 disulfide bridges follow: Cys11–Cys83 and Cys83–Cys90.

It belongs to the low molecular weight phosphotyrosine protein phosphatase family. Thioredoxin-coupled ArsC subfamily.

It is found in the cytoplasm. It catalyses the reaction arsenate + [thioredoxin]-dithiol + H(+) = arsenite + [thioredoxin]-disulfide + H2O. Catalyzes the reduction of arsenate [As(V)] to arsenite [As(III)]. The chain is Arsenate reductase 1 from Bacillus cereus (strain ATCC 10987 / NRS 248).